Reading from the N-terminus, the 330-residue chain is Tryptophan--tRNA ligase (330 aa).

ATP is bound by residues 10–12 and 18–19; these read QTT and GN. Positions 11–19 match the 'HIGH' region motif; the sequence is TTGALHLGN. Asp134 contributes to the L-tryptophan binding site. Residues 146–148, Ile186, and 195–199 contribute to the ATP site; these read GED and KMSKS. The short motif at 195–199 is the 'KMSKS' region element; it reads KMSKS.

The protein belongs to the class-I aminoacyl-tRNA synthetase family. As to quaternary structure, homodimer.

Its subcellular location is the cytoplasm. It catalyses the reaction tRNA(Trp) + L-tryptophan + ATP = L-tryptophyl-tRNA(Trp) + AMP + diphosphate + H(+). In terms of biological role, catalyzes the attachment of tryptophan to tRNA(Trp). This is Tryptophan--tRNA ligase from Rickettsia prowazekii (strain Madrid E).